A 425-amino-acid chain; its full sequence is Glutamyl-tRNA reductase (425 aa).

Substrate-binding positions include Thr-51 to Arg-54, Ser-111, Asp-116 to Gln-118, and Gln-122. Cys-52 acts as the Nucleophile in catalysis. Residue Gly-191–Gly-196 coordinates NADP(+).

This sequence belongs to the glutamyl-tRNA reductase family. Homodimer.

It carries out the reaction (S)-4-amino-5-oxopentanoate + tRNA(Glu) + NADP(+) = L-glutamyl-tRNA(Glu) + NADPH + H(+). It functions in the pathway porphyrin-containing compound metabolism; protoporphyrin-IX biosynthesis; 5-aminolevulinate from L-glutamyl-tRNA(Glu): step 1/2. In terms of biological role, catalyzes the NADPH-dependent reduction of glutamyl-tRNA(Glu) to glutamate 1-semialdehyde (GSA). The polypeptide is Glutamyl-tRNA reductase (Cytophaga hutchinsonii (strain ATCC 33406 / DSM 1761 / CIP 103989 / NBRC 15051 / NCIMB 9469 / D465)).